The chain runs to 190 residues: Pyridoxal 5'-phosphate synthase subunit PdxT (190 aa).

Residue 46 to 48 (GES) participates in L-glutamine binding. The Nucleophile role is filled by Cys-78. Residues Arg-108 and 137-138 (IR) contribute to the L-glutamine site. Active-site charge relay system residues include His-174 and Glu-176.

This sequence belongs to the glutaminase PdxT/SNO family. In the presence of PdxS, forms a dodecamer of heterodimers. Only shows activity in the heterodimer.

It catalyses the reaction aldehydo-D-ribose 5-phosphate + D-glyceraldehyde 3-phosphate + L-glutamine = pyridoxal 5'-phosphate + L-glutamate + phosphate + 3 H2O + H(+). The enzyme catalyses L-glutamine + H2O = L-glutamate + NH4(+). It functions in the pathway cofactor biosynthesis; pyridoxal 5'-phosphate biosynthesis. In terms of biological role, catalyzes the hydrolysis of glutamine to glutamate and ammonia as part of the biosynthesis of pyridoxal 5'-phosphate. The resulting ammonia molecule is channeled to the active site of PdxS. This Chloroflexus aggregans (strain MD-66 / DSM 9485) protein is Pyridoxal 5'-phosphate synthase subunit PdxT.